The chain runs to 203 residues: Gramillins biosynthetic cluster protein FGSG_00038 (203 aa).

It functions in the pathway mycotoxin biosynthesis. In terms of biological role, part of the gene cluster that mediates the biosynthesis of gramillins A and B, bicyclic lipopeptides that induce cell death in maize leaves but not in wheat leaves. The nonribosomal peptide synthetase GRA1 incorporates respectively a glutamic adic (Glu), a leucine (Leu), a serine (Ser), a hydroxyglutamine (HOGln), a 2-amino decanoic acid, and 2 cysteins (CysB and CysA). The biosynthesis of 2-amino decanoic acid incorporated in gramillins could be initiated by a fatty acid synthase composed of the alpha and beta subunits FGSG_00036 and FGSG_11656. The cytochrome P450 monooxygenase FGSG_15680 could hydroxylate the fatty acid chain. Subsequent oxidation to the ketone by the oxidoreductase FGSG_00048 and transamination by aminotransferase FGSG_00049 could form 2-amino-decanoic acid. On the other hand, FGSG_15680 could also be responsible for the HO-modified glutamine at the gamma-position. Whether hydroxylation occurs on the fully assembled product or on the Gln residue prior to assembly into the gramillins requires further proof. The thioredoxin FGSG_00043 could also be required for the disulfide-bond formation between CysA and CysB. The specific involvement of the remaining proteins from the cluster is more difficult to discern, but could have broader regulatory (FGSG_00040 and FGSG_11657) or enzymatic functions (FGSG_00044 and FGSG_00045). The final C-domain of GRA1 does not possess the expected sequence of a termination CT domain, often implicated in macrocyclization and release of a cyclopeptidein fungal NRPs; and the thioesterase FGSG_00047 may act in concert with the terminal C-domain of GRA1 to catalyze the formation of the macrocyclic anhydride and release of the products. The chain is Gramillins biosynthetic cluster protein FGSG_00038 from Gibberella zeae (strain ATCC MYA-4620 / CBS 123657 / FGSC 9075 / NRRL 31084 / PH-1) (Wheat head blight fungus).